We begin with the raw amino-acid sequence, 288 residues long: Pyridoxal kinase PdxY (288 aa).

Substrate is bound by residues Ser-9 and 44–45 (TQ). Residues Asp-111, Glu-148, and Lys-181 each contribute to the ATP site. Substrate is bound at residue Asp-224.

It belongs to the pyridoxine kinase family. PdxY subfamily. In terms of assembly, homodimer. It depends on Mg(2+) as a cofactor.

The enzyme catalyses pyridoxal + ATP = pyridoxal 5'-phosphate + ADP + H(+). Its pathway is cofactor metabolism; pyridoxal 5'-phosphate salvage; pyridoxal 5'-phosphate from pyridoxal: step 1/1. Its function is as follows. Pyridoxal kinase involved in the salvage pathway of pyridoxal 5'-phosphate (PLP). Catalyzes the phosphorylation of pyridoxal to PLP. This is Pyridoxal kinase PdxY from Haemophilus influenzae (strain PittEE).